Here is a 190-residue protein sequence, read N- to C-terminus: Inner membrane-spanning protein YciB (190 aa).

5 helical membrane passes run 22 to 42 (IYVA…LTFA), 50 to 70 (MQLI…FLHD), 76 to 96 (WKVT…HAMG), 118 to 138 (INWA…YVAF), and 148 to 168 (FKVF…GFYI).

Belongs to the YciB family.

The protein resides in the cell inner membrane. Functionally, plays a role in cell envelope biogenesis, maintenance of cell envelope integrity and membrane homeostasis. This Vibrio campbellii (strain ATCC BAA-1116) protein is Inner membrane-spanning protein YciB.